The following is a 211-amino-acid chain: Ribonuclease HII (211 aa).

Residues 17-211 (FLSAGVDEVG…CQPSLFEVRS (195 aa)) form the RNase H type-2 domain. A divalent metal cation-binding residues include Asp23, Glu24, and Asp119.

The protein belongs to the RNase HII family. The cofactor is Mn(2+). Mg(2+) serves as cofactor.

It is found in the cytoplasm. The catalysed reaction is Endonucleolytic cleavage to 5'-phosphomonoester.. Functionally, endonuclease that specifically degrades the RNA of RNA-DNA hybrids. The chain is Ribonuclease HII from Trichodesmium erythraeum (strain IMS101).